Reading from the N-terminus, the 445-residue chain is Arginine/agmatine antiporter (445 aa).

Residues 1-9 (MSSDADAHK) are Cytoplasmic-facing. The chain crosses the membrane as a helical span at residues 10–30 (VGLIPVTLMVSGNIMGSGVFL). I23 is an agmatine binding site. L-arginine-binding residues include I23 and S26. Topologically, residues 31–38 (LPANLAAT) are periplasmic. The chain crosses the membrane as a helical span at residues 39–59 (GGIAIYGWLVTIIGALALSMV). Over 60-98 (YAKMSSLDPSPGGSYAYARRCFGPFLGYQTNVLYWLACW) the chain is Cytoplasmic. Agmatine is bound by residues A96, C97, and N101. An L-arginine-binding site is contributed by A96. Residues 99–119 (IGNIAMVVIGVGYLSYFFPIL) traverse the membrane as a helical segment. Residues 120–122 (KDP) lie on the Periplasmic side of the membrane. A helical membrane pass occupies residues 123–143 (LVLTLTCVAVLWIFVLLNIVG). The Cytoplasmic segment spans residues 144-152 (PKMITRVQA). A helical transmembrane segment spans residues 153-173 (VATVLALVPIVGIAVFGWFWF). At 174–196 (KGETYMAAWNVSGMNTFGAIQST) the chain is on the periplasmic side. A helical transmembrane segment spans residues 197-217 (LNVTLWSFIGVESASVAAGVV). Positions 202 and 205 each coordinate L-arginine. I205 lines the agmatine pocket. At 218–225 (KNPKRNVP) the chain is on the cytoplasmic side. Residues 226-246 (IATIGGVLIAAVCYVLSTTAI) traverse the membrane as a helical segment. Over 247–275 (MGMIPNAALRVSASPFGDAARMALGDTAG) the chain is Periplasmic. A helical transmembrane segment spans residues 276–296 (AIVSFCAAAGCLGSLGGWTLL). Position 293 (W293) interacts with agmatine. Residues 297–319 (AGQTAKAAADDGLFPPIFARVNK) are Cytoplasmic-facing. A helical transmembrane segment spans residues 320 to 340 (AGTPVAGLLIVGVLMTIFQFS). Residues 341–355 (SMSPNAAKEFGLVSS) are Periplasmic-facing. A helical membrane pass occupies residues 356–376 (VSVIFTLVPYLYTCAALLLLG). An L-arginine-binding site is contributed by S357. At 377–385 (HGHFGKARP) the chain is on the cytoplasmic side. The chain crosses the membrane as a helical span at residues 386–406 (LYLLITFVAFVYCIWAVIGSG). Over 407-408 (AK) the chain is Periplasmic. A helical transmembrane segment spans residues 409–429 (EVMWSFVTLMVITALYALNYN). Over 430–445 (RIHKNPYPLDAPVKQD) the chain is Cytoplasmic.

Belongs to the amino acid-polyamine-organocation (APC) superfamily. Basic amino acid/polyamine antiporter (APA) (TC 2.A.3.2) family. Homodimer; each subunit has its own individual transport capacity.

The protein localises to the cell inner membrane. The catalysed reaction is agmatine(in) + L-arginine(out) = agmatine(out) + L-arginine(in). In terms of biological role, major component of the acid-resistance (AR) system allowing enteric pathogens to survive the acidic environment in the stomach. Exchanges extracellular arginine for its intracellular decarboxylation product agmatine (Agm) thereby expelling intracellular protons. Probably undergoes several conformational states in order to translocate the substrate across the membrane; keeps the substrate accessible to only 1 side of the membrane at a time by opening and closing 3 membrane-internal gates. This Salmonella typhi protein is Arginine/agmatine antiporter (adiC).